Here is a 469-residue protein sequence, read N- to C-terminus: Proline--tRNA ligase (469 aa).

The protein belongs to the class-II aminoacyl-tRNA synthetase family. ProS type 3 subfamily. As to quaternary structure, homodimer.

The protein localises to the cytoplasm. The enzyme catalyses tRNA(Pro) + L-proline + ATP = L-prolyl-tRNA(Pro) + AMP + diphosphate. In terms of biological role, catalyzes the attachment of proline to tRNA(Pro) in a two-step reaction: proline is first activated by ATP to form Pro-AMP and then transferred to the acceptor end of tRNA(Pro). This Methanosphaera stadtmanae (strain ATCC 43021 / DSM 3091 / JCM 11832 / MCB-3) protein is Proline--tRNA ligase.